The sequence spans 223 residues: Deoxyribose-phosphate aldolase (223 aa).

D92 acts as the Proton donor/acceptor in catalysis. Catalysis depends on K154, which acts as the Schiff-base intermediate with acetaldehyde. The active-site Proton donor/acceptor is K182.

This sequence belongs to the DeoC/FbaB aldolase family. DeoC type 1 subfamily.

The protein localises to the cytoplasm. It carries out the reaction 2-deoxy-D-ribose 5-phosphate = D-glyceraldehyde 3-phosphate + acetaldehyde. It participates in carbohydrate degradation; 2-deoxy-D-ribose 1-phosphate degradation; D-glyceraldehyde 3-phosphate and acetaldehyde from 2-deoxy-alpha-D-ribose 1-phosphate: step 2/2. Functionally, catalyzes a reversible aldol reaction between acetaldehyde and D-glyceraldehyde 3-phosphate to generate 2-deoxy-D-ribose 5-phosphate. This chain is Deoxyribose-phosphate aldolase, found in Haemophilus influenzae (strain ATCC 51907 / DSM 11121 / KW20 / Rd).